A 180-amino-acid chain; its full sequence is Large ribosomal subunit protein uL5 (180 aa).

This sequence belongs to the universal ribosomal protein uL5 family. Part of the 50S ribosomal subunit; part of the 5S rRNA/L5/L18/L25 subcomplex. Contacts the 5S rRNA and the P site tRNA. Forms a bridge to the 30S subunit in the 70S ribosome.

In terms of biological role, this is one of the proteins that bind and probably mediate the attachment of the 5S RNA into the large ribosomal subunit, where it forms part of the central protuberance. In the 70S ribosome it contacts protein S13 of the 30S subunit (bridge B1b), connecting the 2 subunits; this bridge is implicated in subunit movement. Contacts the P site tRNA; the 5S rRNA and some of its associated proteins might help stabilize positioning of ribosome-bound tRNAs. This Synechocystis sp. (strain ATCC 27184 / PCC 6803 / Kazusa) protein is Large ribosomal subunit protein uL5.